Here is a 221-residue protein sequence, read N- to C-terminus: Large ribosomal subunit protein uL3 (221 aa).

Belongs to the universal ribosomal protein uL3 family. Part of the 50S ribosomal subunit. Forms a cluster with proteins L14 and L19.

In terms of biological role, one of the primary rRNA binding proteins, it binds directly near the 3'-end of the 23S rRNA, where it nucleates assembly of the 50S subunit. The polypeptide is Large ribosomal subunit protein uL3 (Nocardia farcinica (strain IFM 10152)).